A 250-amino-acid polypeptide reads, in one-letter code: 3-deoxy-manno-octulosonate cytidylyltransferase (250 aa).

Belongs to the KdsB family.

Its subcellular location is the cytoplasm. It catalyses the reaction 3-deoxy-alpha-D-manno-oct-2-ulosonate + CTP = CMP-3-deoxy-beta-D-manno-octulosonate + diphosphate. Its pathway is nucleotide-sugar biosynthesis; CMP-3-deoxy-D-manno-octulosonate biosynthesis; CMP-3-deoxy-D-manno-octulosonate from 3-deoxy-D-manno-octulosonate and CTP: step 1/1. It participates in bacterial outer membrane biogenesis; lipopolysaccharide biosynthesis. Functionally, activates KDO (a required 8-carbon sugar) for incorporation into bacterial lipopolysaccharide in Gram-negative bacteria. This Yersinia pseudotuberculosis serotype O:1b (strain IP 31758) protein is 3-deoxy-manno-octulosonate cytidylyltransferase.